Here is a 295-residue protein sequence, read N- to C-terminus: Protoheme IX farnesyltransferase (295 aa).

A run of 9 helical transmembrane segments spans residues 8 to 28 (ITKP…FFLA), 35 to 55 (GGLF…GCVF), 83 to 103 (GVTL…LWFG), 107 to 127 (LATA…SLYL), 132 to 152 (IYGT…GYCA), 162 to 182 (LTLL…IAIF), 208 to 228 (IFWY…GGYA), 229 to 249 (GYGY…MALR), and 263 to 283 (VFIF…IDFQ).

This sequence belongs to the UbiA prenyltransferase family. Protoheme IX farnesyltransferase subfamily.

The protein localises to the cell inner membrane. It carries out the reaction heme b + (2E,6E)-farnesyl diphosphate + H2O = Fe(II)-heme o + diphosphate. Its pathway is porphyrin-containing compound metabolism; heme O biosynthesis; heme O from protoheme: step 1/1. Functionally, converts heme B (protoheme IX) to heme O by substitution of the vinyl group on carbon 2 of heme B porphyrin ring with a hydroxyethyl farnesyl side group. The sequence is that of Protoheme IX farnesyltransferase from Chromohalobacter salexigens (strain ATCC BAA-138 / DSM 3043 / CIP 106854 / NCIMB 13768 / 1H11).